A 288-amino-acid polypeptide reads, in one-letter code: Bifunctional protein FolD (288 aa).

Residues 166–168 (GRS), Ser-191, and Ile-232 contribute to the NADP(+) site.

Belongs to the tetrahydrofolate dehydrogenase/cyclohydrolase family. As to quaternary structure, homodimer.

The catalysed reaction is (6R)-5,10-methylene-5,6,7,8-tetrahydrofolate + NADP(+) = (6R)-5,10-methenyltetrahydrofolate + NADPH. The enzyme catalyses (6R)-5,10-methenyltetrahydrofolate + H2O = (6R)-10-formyltetrahydrofolate + H(+). Its pathway is one-carbon metabolism; tetrahydrofolate interconversion. Its function is as follows. Catalyzes the oxidation of 5,10-methylenetetrahydrofolate to 5,10-methenyltetrahydrofolate and then the hydrolysis of 5,10-methenyltetrahydrofolate to 10-formyltetrahydrofolate. The protein is Bifunctional protein FolD of Rickettsia rickettsii (strain Iowa).